The sequence spans 432 residues: GTPase HflX (432 aa).

Residues 202-367 (FTVALVGYTN…ELRRAVGRAM (166 aa)) enclose the Hflx-type G domain. GTP is bound by residues 208–215 (GYTNAGKS), 233–237 (FATLD), 255–258 (DTVG), 321–324 (NKID), and 345–347 (SAQ). S215 and T235 together coordinate Mg(2+).

This sequence belongs to the TRAFAC class OBG-HflX-like GTPase superfamily. HflX GTPase family. Monomer. Associates with the 50S ribosomal subunit. It depends on Mg(2+) as a cofactor.

It localises to the cytoplasm. Its function is as follows. GTPase that associates with the 50S ribosomal subunit and may have a role during protein synthesis or ribosome biogenesis. This Magnetococcus marinus (strain ATCC BAA-1437 / JCM 17883 / MC-1) protein is GTPase HflX.